The primary structure comprises 423 residues: Histidine--tRNA ligase (423 aa).

Belongs to the class-II aminoacyl-tRNA synthetase family. In terms of assembly, homodimer.

Its subcellular location is the cytoplasm. It catalyses the reaction tRNA(His) + L-histidine + ATP = L-histidyl-tRNA(His) + AMP + diphosphate + H(+). The chain is Histidine--tRNA ligase from Bacillus cytotoxicus (strain DSM 22905 / CIP 110041 / 391-98 / NVH 391-98).